The chain runs to 222 residues: 2-C-methyl-D-erythritol 4-phosphate cytidylyltransferase (222 aa).

It belongs to the IspD/TarI cytidylyltransferase family. IspD subfamily.

It carries out the reaction 2-C-methyl-D-erythritol 4-phosphate + CTP + H(+) = 4-CDP-2-C-methyl-D-erythritol + diphosphate. The protein operates within isoprenoid biosynthesis; isopentenyl diphosphate biosynthesis via DXP pathway; isopentenyl diphosphate from 1-deoxy-D-xylulose 5-phosphate: step 2/6. Its function is as follows. Catalyzes the formation of 4-diphosphocytidyl-2-C-methyl-D-erythritol from CTP and 2-C-methyl-D-erythritol 4-phosphate (MEP). In Porphyromonas gingivalis (strain ATCC BAA-308 / W83), this protein is 2-C-methyl-D-erythritol 4-phosphate cytidylyltransferase.